The chain runs to 250 residues: Dihydroorotate dehydrogenase B (NAD(+)), electron transfer subunit (250 aa).

The FAD-binding FR-type domain occupies 1 to 94 (MKVVAQEEIA…MGPQGNGFDL (94 aa)). FAD contacts are provided by residues 45-48 (RPIS), 62-64 (IYR), and 69-70 (GT). Positions 214, 219, 222, and 237 each coordinate [2Fe-2S] cluster.

Belongs to the PyrK family. In terms of assembly, heterotetramer of 2 PyrK and 2 PyrD type B subunits. Requires [2Fe-2S] cluster as cofactor. FAD serves as cofactor.

The protein operates within pyrimidine metabolism; UMP biosynthesis via de novo pathway; orotate from (S)-dihydroorotate (NAD(+) route): step 1/1. Functionally, responsible for channeling the electrons from the oxidation of dihydroorotate from the FMN redox center in the PyrD type B subunit to the ultimate electron acceptor NAD(+). The polypeptide is Dihydroorotate dehydrogenase B (NAD(+)), electron transfer subunit (Streptococcus pneumoniae serotype 4 (strain ATCC BAA-334 / TIGR4)).